Consider the following 500-residue polypeptide: Na(+)/H(+) antiporter NhaB (500 aa).

12 consecutive transmembrane segments (helical) span residues 28–50, 68–88, 98–118, 121–141, 145–165, 205–225, 244–264, 301–318, 350–370, 394–414, 449–469, and 477–497; these read FLLS…VLVG, GGLL…ALYA, LLLM…LLLF, LLLG…LAAL, FLDA…FFAV, LLMH…VGEP, QVAP…VALE, ALLV…GLAL, FQEA…VAVI, MLFI…VATI, VATP…IAPL, and MVWM…WAVS.

It belongs to the NhaB Na(+)/H(+) (TC 2.A.34) antiporter family.

It is found in the cell inner membrane. The catalysed reaction is 2 Na(+)(in) + 3 H(+)(out) = 2 Na(+)(out) + 3 H(+)(in). Its function is as follows. Na(+)/H(+) antiporter that extrudes sodium in exchange for external protons. This is Na(+)/H(+) antiporter NhaB from Pseudomonas paraeruginosa (strain DSM 24068 / PA7) (Pseudomonas aeruginosa (strain PA7)).